Reading from the N-terminus, the 252-residue chain is 2-succinyl-6-hydroxy-2,4-cyclohexadiene-1-carboxylate synthase (252 aa).

The protein belongs to the AB hydrolase superfamily. MenH family. As to quaternary structure, monomer.

It catalyses the reaction 5-enolpyruvoyl-6-hydroxy-2-succinyl-cyclohex-3-ene-1-carboxylate = (1R,6R)-6-hydroxy-2-succinyl-cyclohexa-2,4-diene-1-carboxylate + pyruvate. It functions in the pathway quinol/quinone metabolism; 1,4-dihydroxy-2-naphthoate biosynthesis; 1,4-dihydroxy-2-naphthoate from chorismate: step 3/7. It participates in quinol/quinone metabolism; menaquinone biosynthesis. Its function is as follows. Catalyzes a proton abstraction reaction that results in 2,5-elimination of pyruvate from 2-succinyl-5-enolpyruvyl-6-hydroxy-3-cyclohexene-1-carboxylate (SEPHCHC) and the formation of 2-succinyl-6-hydroxy-2,4-cyclohexadiene-1-carboxylate (SHCHC). In Salmonella arizonae (strain ATCC BAA-731 / CDC346-86 / RSK2980), this protein is 2-succinyl-6-hydroxy-2,4-cyclohexadiene-1-carboxylate synthase.